The primary structure comprises 333 residues: Probable tRNA pseudouridine synthase B (333 aa).

The active-site Nucleophile is aspartate 66. Positions 233–308 constitute a PUA domain; it reads LKKIIIKDSA…EVVEITRVIM (76 aa).

This sequence belongs to the pseudouridine synthase TruB family. Type 2 subfamily.

It catalyses the reaction uridine(55) in tRNA = pseudouridine(55) in tRNA. Could be responsible for synthesis of pseudouridine from uracil-55 in the psi GC loop of transfer RNAs. The polypeptide is Probable tRNA pseudouridine synthase B (Methanococcus maripaludis (strain DSM 14266 / JCM 13030 / NBRC 101832 / S2 / LL)).